Here is a 506-residue protein sequence, read N- to C-terminus: D-alanine--D-alanyl carrier protein ligase (506 aa).

152-153 (TS) lines the ATP pocket. D197 is a binding site for D-alanine. 292-297 (NTYGPT) is an ATP binding site. V301 provides a ligand contact to D-alanine. ATP contacts are provided by residues D383, 395–398 (YRGR), and K494. K494 provides a ligand contact to D-alanine.

Belongs to the ATP-dependent AMP-binding enzyme family. DltA subfamily.

Its subcellular location is the cytoplasm. It carries out the reaction holo-[D-alanyl-carrier protein] + D-alanine + ATP = D-alanyl-[D-alanyl-carrier protein] + AMP + diphosphate. It participates in cell wall biogenesis; lipoteichoic acid biosynthesis. Catalyzes the first step in the D-alanylation of lipoteichoic acid (LTA), the activation of D-alanine and its transfer onto the D-alanyl carrier protein (Dcp) DltC. In an ATP-dependent two-step reaction, forms a high energy D-alanyl-AMP intermediate, followed by transfer of the D-alanyl residue as a thiol ester to the phosphopantheinyl prosthetic group of the Dcp. D-alanylation of LTA plays an important role in modulating the properties of the cell wall in Gram-positive bacteria, influencing the net charge of the cell wall. This Lacticaseibacillus rhamnosus (Lactobacillus rhamnosus) protein is D-alanine--D-alanyl carrier protein ligase.